We begin with the raw amino-acid sequence, 398 residues long: Peptidyl-prolyl cis-trans isomerase D (398 aa).

The PPIase cyclophilin-type domain maps to 21–185; that stretch reads FGSSPASRPG…EDVKIVDCGE (165 aa). 3 TPR repeats span residues 229 to 262, 282 to 323, and 335 to 368; these read GLAL…LQLH, TSIQ…PSTE, and AKAF…APED.

It belongs to the cyclophilin-type PPIase family. PPIase D subfamily.

Its subcellular location is the cytoplasm. It catalyses the reaction [protein]-peptidylproline (omega=180) = [protein]-peptidylproline (omega=0). Its function is as follows. PPIases accelerate the folding of proteins. It catalyzes the cis-trans isomerization of proline imidic peptide bonds in oligopeptides. This is Peptidyl-prolyl cis-trans isomerase D (CPR6) from Mycosarcoma maydis (Corn smut fungus).